A 141-amino-acid polypeptide reads, in one-letter code: Organic hydroperoxide resistance protein-like 1 (141 aa).

The disordered stretch occupies residues 1–20 (MAVNYETKATNTGGRNGHVQ).

This sequence belongs to the OsmC/Ohr family.

The chain is Organic hydroperoxide resistance protein-like 1 from Staphylococcus saprophyticus subsp. saprophyticus (strain ATCC 15305 / DSM 20229 / NCIMB 8711 / NCTC 7292 / S-41).